The primary structure comprises 719 residues: Protein psiI (719 aa).

A signal peptide spans 1 to 19; sequence MKIIFNLLILFSLVNFINS. Residues 20-658 lie on the Extracellular side of the membrane; sequence QSTTQATTLK…ICQTGAIVST (639 aa). Residues Asn62, Asn105, Asn118, Asn151, Asn315, Asn379, Asn454, Asn488, Asn500, Asn538, Asn592, and Asn629 are each glycosylated (N-linked (GlcNAc...) asparagine). Residues 119–261 enclose the PA14 domain; sequence LTLNPSTGTY…YDYCGVCYGD (143 aa). A helical transmembrane segment spans residues 659–679; sequence AVVASVVVVGAVVLGAAIFAG. Over 680 to 719 the chain is Cytoplasmic; sequence KKGYDHWKANQGQVFASSNANPLYQQSNNGGENALFEAPQ.

The protein belongs to the prespore-cell-inducing factor family.

The protein localises to the membrane. The polypeptide is Protein psiI (psiI) (Dictyostelium discoideum (Social amoeba)).